The primary structure comprises 177 residues: Coatomer subunit zeta-1 (177 aa).

This sequence belongs to the adaptor complexes small subunit family. As to quaternary structure, oligomeric complex that consists of at least the alpha, beta, beta', gamma, delta, epsilon and zeta subunits.

It is found in the cytoplasm. Its subcellular location is the golgi apparatus membrane. The protein localises to the cytoplasmic vesicle. The protein resides in the COPI-coated vesicle membrane. In terms of biological role, the coatomer is a cytosolic protein complex that binds to dilysine motifs and reversibly associates with Golgi non-clathrin-coated vesicles, which further mediate biosynthetic protein transport from the ER, via the Golgi up to the trans Golgi network. Coatomer complex is required for budding from Golgi membranes, and is essential for the retrograde Golgi-to-ER transport of dilysine-tagged proteins. The zeta subunit may be involved in regulating the coat assembly and, hence, the rate of biosynthetic protein transport due to its association-dissociation properties with the coatomer complex. The chain is Coatomer subunit zeta-1 from Arabidopsis thaliana (Mouse-ear cress).